Reading from the N-terminus, the 391-residue chain is Formate-dependent phosphoribosylglycinamide formyltransferase (391 aa).

Residues 20–21 (EL) and Glu80 contribute to the N(1)-(5-phospho-beta-D-ribosyl)glycinamide site. ATP contacts are provided by residues Arg112, Lys153, 158–163 (SSGKGQ), 193–196 (EGFI), and Glu201. One can recognise an ATP-grasp domain in the interval 117–306 (RLAAETLGLP…EFALHVRAIL (190 aa)). The Mg(2+) site is built by Glu265 and Glu277. Residues Asp284, Lys354, and 361–362 (RR) each bind N(1)-(5-phospho-beta-D-ribosyl)glycinamide.

It belongs to the PurK/PurT family. Homodimer.

The enzyme catalyses N(1)-(5-phospho-beta-D-ribosyl)glycinamide + formate + ATP = N(2)-formyl-N(1)-(5-phospho-beta-D-ribosyl)glycinamide + ADP + phosphate + H(+). Its pathway is purine metabolism; IMP biosynthesis via de novo pathway; N(2)-formyl-N(1)-(5-phospho-D-ribosyl)glycinamide from N(1)-(5-phospho-D-ribosyl)glycinamide (formate route): step 1/1. Its function is as follows. Involved in the de novo purine biosynthesis. Catalyzes the transfer of formate to 5-phospho-ribosyl-glycinamide (GAR), producing 5-phospho-ribosyl-N-formylglycinamide (FGAR). Formate is provided by PurU via hydrolysis of 10-formyl-tetrahydrofolate. The protein is Formate-dependent phosphoribosylglycinamide formyltransferase of Shewanella oneidensis (strain ATCC 700550 / JCM 31522 / CIP 106686 / LMG 19005 / NCIMB 14063 / MR-1).